The chain runs to 495 residues: Aspartyl/glutamyl-tRNA(Asn/Gln) amidotransferase subunit B (495 aa).

The protein belongs to the GatB/GatE family. GatB subfamily. As to quaternary structure, heterotrimer of A, B and C subunits.

The catalysed reaction is L-glutamyl-tRNA(Gln) + L-glutamine + ATP + H2O = L-glutaminyl-tRNA(Gln) + L-glutamate + ADP + phosphate + H(+). The enzyme catalyses L-aspartyl-tRNA(Asn) + L-glutamine + ATP + H2O = L-asparaginyl-tRNA(Asn) + L-glutamate + ADP + phosphate + 2 H(+). Functionally, allows the formation of correctly charged Asn-tRNA(Asn) or Gln-tRNA(Gln) through the transamidation of misacylated Asp-tRNA(Asn) or Glu-tRNA(Gln) in organisms which lack either or both of asparaginyl-tRNA or glutaminyl-tRNA synthetases. The reaction takes place in the presence of glutamine and ATP through an activated phospho-Asp-tRNA(Asn) or phospho-Glu-tRNA(Gln). The polypeptide is Aspartyl/glutamyl-tRNA(Asn/Gln) amidotransferase subunit B (Methanosarcina barkeri (strain Fusaro / DSM 804)).